Consider the following 273-residue polypeptide: 2,3,4,5-tetrahydropyridine-2,6-dicarboxylate N-succinyltransferase (273 aa).

Residues Arg-104 and Asp-141 each coordinate substrate.

Belongs to the transferase hexapeptide repeat family. Homotrimer.

It localises to the cytoplasm. The catalysed reaction is (S)-2,3,4,5-tetrahydrodipicolinate + succinyl-CoA + H2O = (S)-2-succinylamino-6-oxoheptanedioate + CoA. The protein operates within amino-acid biosynthesis; L-lysine biosynthesis via DAP pathway; LL-2,6-diaminopimelate from (S)-tetrahydrodipicolinate (succinylase route): step 1/3. The protein is 2,3,4,5-tetrahydropyridine-2,6-dicarboxylate N-succinyltransferase of Nitrosomonas eutropha (strain DSM 101675 / C91 / Nm57).